The chain runs to 406 residues: Probable 2,3-bisphosphoglycerate-independent phosphoglycerate mutase (406 aa).

The protein belongs to the BPG-independent phosphoglycerate mutase family. A-PGAM subfamily.

The enzyme catalyses (2R)-2-phosphoglycerate = (2R)-3-phosphoglycerate. The protein operates within carbohydrate degradation; glycolysis; pyruvate from D-glyceraldehyde 3-phosphate: step 3/5. In terms of biological role, catalyzes the interconversion of 2-phosphoglycerate and 3-phosphoglycerate. The protein is Probable 2,3-bisphosphoglycerate-independent phosphoglycerate mutase of Thermus thermophilus (strain ATCC 27634 / DSM 579 / HB8).